The sequence spans 619 residues: Bifunctional glutathionylspermidine synthetase/amidase (619 aa).

Residues 2–195 (SKGTTSQDAP…LGWMIQTEDT (194 aa)) are gsp amidase. A Peptidase C51 domain is found at 34-176 (DPQEYEDDAV…MVVENGCYTL (143 aa)). A glutathionylspermidine-binding site is contributed by Gln-58. Cys-59 serves as the catalytic S-(gamma-glutamyl-cysteinyl-glycyl)-cysteine intermediate. A Cysteine sulfenic acid (-SOH); transient modification is found at Cys-59. Glutathionylspermidine-binding positions include Arg-64, 78-81 (VGMA), and Asn-149. Positions 196 to 205 (EYSLPQPEIA) are linker. The segment at 206–619 (GELLKISGAR…DIEPLIVVKK (414 aa)) is gsp synthetase. Arg-316 is a glutathione binding site. Residue 316-318 (RMD) participates in ATP binding. 3 residues coordinate Mg(2+): Asp-318, Glu-330, and Asn-332. Position 335 (Ser-335) interacts with glutathione. Residue Glu-391 coordinates spermidine. Residues Glu-392 and Thr-446 each coordinate glutathione. Residues Lys-498, Lys-533, 539-540 (CG), 568-571 (QQLW), Gln-582, and 603-605 (LVI) each bind ATP. Asp-610 lines the spermidine pocket.

In the C-terminal section; belongs to the glutathionylspermidine synthase preATP-grasp family. Homodimer. In terms of processing, oxidation of Cys-59 to sulfenic acid during oxidative stress selectively inhibits the amidase activity which leads to a rapid increase in the amounts of intracellular Gsp and Gsp S-thiolated proteins (GspSSPs).

It catalyses the reaction spermidine + glutathione + ATP = glutathionylspermidine + ADP + phosphate + H(+). The catalysed reaction is glutathionylspermidine + H2O = spermidine + glutathione. Its pathway is sulfur metabolism; glutathione metabolism. The protein operates within amine and polyamine metabolism; spermidine metabolism. When exposed to oxidative stress, Gsp amidase activity is transiently inhibited in vivo by oxidation of the catalytic Cys-59 thiol to sulfenic acid; this modification does not affect Gsp synthetase activity. Gsp amidase activity is negatively autoregulated by the Gsp synthetase domain, and is activated by the Gsp synthetase substrates, GSH and ATP-Mg(2+); the occupancy of the synthetase active site may initiate communication through the protein as manifest by the release of inhibition of the amidase activity. A tetrahedral phosphonate analog of glutathionylspermidine, designed as a mimic of the proposed tetrahedral intermediate for either reaction, inhibits the synthetase activity (Ki of 10 uM) but does not inhibit the amidase activity. Amidase activity is inhibited by iodoacetamide in vitro. Its function is as follows. Catalyzes the formation of an amide bond between glutathione (GSH) and spermidine coupled with hydrolysis of ATP; also catalyzes the opposing reaction, i.e. the hydrolysis of glutathionylspermidine (Gsp) back to glutathione and spermidine. The amidase active site can also hydrolyze Gsp-disulfide (Gsp-S-S-Gsp) to Gsp-SG and Gsp S-thiolated proteins (GspSSPs) to GSH S-thiolated protein (GSSPs). Likely acts synergistically with glutaredoxin to regulate the redox environment of E.coli and defend against oxidative damage. In vitro, the amidase active site also catalyzes hydrolysis of amide and ester derivatives of glutathione (e.g. glutathione ethyl ester and glutathione amide) but lacks activity toward acetylspermidine (N1 and N8) and acetylspermine (N1). The polypeptide is Bifunctional glutathionylspermidine synthetase/amidase (gss) (Escherichia coli (strain K12)).